A 106-amino-acid chain; its full sequence is Immunoglobulin lambda constant 6 (106 aa).

The Ig-like domain maps to 7 to 101; the sequence is PSVTLFPPSS…EGSTVEKTVA (95 aa). Cys-28 and Cys-87 form a disulfide bridge.

In terms of assembly, immunoglobulins are composed of two identical heavy chains and two identical light chains; disulfide-linked.

The protein localises to the secreted. It is found in the cell membrane. Functionally, constant region of immunoglobulin light chains. Immunoglobulins, also known as antibodies, are membrane-bound or secreted glycoproteins produced by B lymphocytes. In the recognition phase of humoral immunity, the membrane-bound immunoglobulins serve as receptors which, upon binding of a specific antigen, trigger the clonal expansion and differentiation of B lymphocytes into immunoglobulins-secreting plasma cells. Secreted immunoglobulins mediate the effector phase of humoral immunity, which results in the elimination of bound antigens. The antigen binding site is formed by the variable domain of one heavy chain, together with that of its associated light chain. Thus, each immunoglobulin has two antigen binding sites with remarkable affinity for a particular antigen. The variable domains are assembled by a process called V-(D)-J rearrangement and can then be subjected to somatic hypermutations which, after exposure to antigen and selection, allow affinity maturation for a particular antigen. This Homo sapiens (Human) protein is Immunoglobulin lambda constant 6.